A 585-amino-acid chain; its full sequence is Potassium-transporting ATPase potassium-binding subunit (585 aa).

Transmembrane regions (helical) follow at residues 25 to 45 (IIIF…SFYI), 84 to 104 (YFIN…LVIM), 152 to 172 (FVIT…SMAF), 194 to 214 (IFDL…LAGV), 275 to 295 (LEFV…GIVF), 307 to 327 (VIMF…YVGV), 345 to 365 (AIGV…STGA), 368 to 388 (GALV…LLLN), 397 to 417 (GVLN…LMVG), 437 to 457 (LSLV…LMIP), 502 to 522 (LDGV…LVIA), and 547 to 567 (LLLI…IIVL).

This sequence belongs to the KdpA family. As to quaternary structure, the system is composed of three essential subunits: KdpA, KdpB and KdpC.

The protein resides in the cell membrane. Part of the high-affinity ATP-driven potassium transport (or Kdp) system, which catalyzes the hydrolysis of ATP coupled with the electrogenic transport of potassium into the cytoplasm. This subunit binds the extracellular potassium ions and delivers the ions to the membrane domain of KdpB through an intramembrane tunnel. In Thermoplasma volcanium (strain ATCC 51530 / DSM 4299 / JCM 9571 / NBRC 15438 / GSS1), this protein is Potassium-transporting ATPase potassium-binding subunit.